The sequence spans 139 residues: Peptide methionine sulfoxide reductase MsrB (139 aa).

The MsrB domain occupies 8–130 (DREWQRELSP…NSASLQLKTQ (123 aa)). Zn(2+) contacts are provided by Cys-47, Cys-50, Cys-96, and Cys-99. Cys-119 acts as the Nucleophile in catalysis.

The protein belongs to the MsrB Met sulfoxide reductase family. The cofactor is Zn(2+).

It carries out the reaction L-methionyl-[protein] + [thioredoxin]-disulfide + H2O = L-methionyl-(R)-S-oxide-[protein] + [thioredoxin]-dithiol. This chain is Peptide methionine sulfoxide reductase MsrB, found in Acinetobacter baumannii (strain AB307-0294).